A 552-amino-acid chain; its full sequence is Serine palmitoyltransferase 3 (552 aa).

The interval 1–29 is disordered; the sequence is MANPGGGAVCNGKLHNHKKQSNGSQSRNC. The helical transmembrane segment at 59–79 threads the bilayer; sequence PLHVMVFTYMGYGIGTLFGYL. K371 carries the N6-(pyridoxal phosphate)lysine modification.

The protein belongs to the class-II pyridoxal-phosphate-dependent aminotransferase family. In terms of assembly, component of the serine palmitoyltransferase (SPT) complex, which is composed of SPTLC1, SPTLC2 or SPTLC3 and SPTSSA or SPTSSB. The heterodimer consisting of SPTLC1 and SPTLC2/SPTLC3 forms the catalytic core of the enzyme, while SPTSSA or SPTSSB subunits determine substrate specificity. SPT also interacts with ORMDL proteins, especially ORMDL3, which negatively regulate SPT activity in the presence of ceramides. The cofactor is pyridoxal 5'-phosphate. As to expression, expressed in most tissues, except peripheral blood cells and bone marrow, with highest levels in heart, kidney, liver, uterus and skin.

The protein localises to the endoplasmic reticulum membrane. The enzyme catalyses L-serine + hexadecanoyl-CoA + H(+) = 3-oxosphinganine + CO2 + CoA. It carries out the reaction dodecanoyl-CoA + L-serine + H(+) = 3-oxotetradecasphinganine + CO2 + CoA. The catalysed reaction is tetradecanoyl-CoA + L-serine + H(+) = 3-oxohexadecasphinganine + CO2 + CoA. It catalyses the reaction octadecanoyl-CoA + L-serine + H(+) = 3-oxoeicosasphinganine + CO2 + CoA. The protein operates within lipid metabolism; sphingolipid metabolism. With respect to regulation, SPT complex catalytic activity is negatively regulated by ORMDL proteins, including ORMDL3, in the presence of ceramides. This mechanism allows to maintain ceramide levels at sufficient concentrations for the production of complex sphingolipids, but which prevents the accumulation of ceramides to levels that trigger apoptosis. Its function is as follows. Component of the serine palmitoyltransferase multisubunit enzyme (SPT) that catalyzes the initial and rate-limiting step in sphingolipid biosynthesis by condensing L-serine and activated acyl-CoA (most commonly palmitoyl-CoA) to form long-chain bases. The SPT complex is composed of SPTLC1, SPTLC2 or SPTLC3 and SPTSSA or SPTSSB. Within this complex, the heterodimer consisting of SPTLC1 and SPTLC2/SPTLC3 forms the catalytic core. The composition of the serine palmitoyltransferase (SPT) complex determines the substrate preference. The SPTLC1-SPTLC2-SPTSSA complex shows a strong preference for C16-CoA substrate, while the SPTLC1-SPTLC3-SPTSSA isozyme uses both C14-CoA and C16-CoA as substrates, with a slight preference for C14-CoA. The SPTLC1-SPTLC2-SPTSSB complex shows a strong preference for C18-CoA substrate, while the SPTLC1-SPTLC3-SPTSSB isozyme displays an ability to use a broader range of acyl-CoAs, without apparent preference. The protein is Serine palmitoyltransferase 3 of Homo sapiens (Human).